Reading from the N-terminus, the 85-residue chain is MRKNASALKRSRQNLKRKIRNVSVKSELKTIEKRCINMIKAGKKDEAIEFFKFVAKKLDTAARKRIIHKNKAARKKSRLNVLLLK.

Belongs to the bacterial ribosomal protein bS20 family.

Binds directly to 16S ribosomal RNA. The sequence is that of Small ribosomal subunit protein bS20 from Borreliella afzelii (strain PKo) (Borrelia afzelii).